A 518-amino-acid polypeptide reads, in one-letter code: D-aminopeptidase (518 aa).

The active-site Nucleophile is the serine 62. Lysine 65 (proton donor/acceptor) is an active-site residue. The important for specificity stretch occupies residues 477–487 (QRSMDAPSPGE). Aspartate 481 contributes to the substrate binding site.

It belongs to the peptidase S12 family. Homodimer.

It catalyses the reaction Release of an N-terminal D-amino acid from a peptide, Xaa-|-Yaa-, in which Xaa is preferably D-Ala, D-Ser or D-Thr. D-amino acid amides and methyl esters also are hydrolyzed, as is glycine amide.. Its activity is regulated as follows. Inhibited by beta-lactam compounds such as 6-aminopenicillic acid, 7-aminocephalosporanic acid, benzylpenicillin and ampicillin. Inhibited by p-chloromercuribenzoate. Its function is as follows. Hydrolyzes N-terminal residues in D-amino acid-containing peptides. The sequence is that of D-aminopeptidase from Brucella ovis (strain ATCC 25840 / 63/290 / NCTC 10512).